Consider the following 2462-residue polypeptide: MASFLVGFLLPSLLLAAALINWSVISFLDLIAFLLVHYIAPEIGYRFQRRHWLLWPIFIFSFAVFLAQVVYLVIWAALGQDWDTPDTGWMRVIGFMILKSWRNPTVMYFLALQLLTSLVALADIYSSRFGFARWRDTWWSHFSGIFEHLGSHLRVASCLLLPAVQLAVGICNPSWVSLPFFIGSCAGLVDWSLTSNVSGLFRWWRVLYIYAGFNIVLLYLYQLPINFSDMIRWIASFIGLFRISLETEGPDICSGLFLVLFYIMLSYVRSDLEDMDFIMSTSENNLAERLLPPKYSFFIRESRAGVRHTNVLLRGAVFKTFSINFFTYGFPVSLFALSFWSFHFASLCAFGLLAYVGYIIYAFPSLFQLHRLNGLLLVFILLWAVSTYIFNVAFSFLNTKVGKFGLGMLVALGNLVNNSVFLYLSEESSRSSNERSYVEADEETKVLVVATIAWGLRKCSRAIMLALIFLIAMKPGFFHAVYVIFFLMYLLSHNINRKIRKSLILLCEVHFALLYILEIDLVSNSLKQEGSASREVLFQLGLLRSESSWDFLEIALLACFCAIHNHGFEVLFSFSAIVRHTPSPPIGFSILKAGLNKSVLLSVYSSPSSSYSQDNTTYERHIASFLSAIGQKFLSMYRSCGTYIAFITILISVYLVKPNYVSFGYIFLLLLWITGRQLFEETKRRLWFPLKAYAVLVFMFIYCLSSFVSLQLWLSGFIDLYFYLGYNSKAPLLDNVWESLAVLIVMQLYSYERRQSGHYIPGQSSLLHPGVFGFFERFLAWHGQKILFAALFYASLSPISVFGFVYLLGLVICTTFPKSSSIPSKSFLIYTGFLVSAEYLFQLWGMQAQMFPGQKYAELSFYLGLRVYEPGFWGIESGLRGKVLVVAACTLQYNVFRWLERTSGLTVIKGKYEEPCPLFVSAEDTTASVSSSNGENPSSTDHASISMKQGEATSNSWPFFSPRGNQGAGFLHPKTGGSESGSSRKFSFGHFWGSIKESHRWNRRRILALKKERFETQKNLLKIYLKFWIENMFNLYGLEINMIALLLASFALLNAISMVYIALLAACVLLRRRVIQKLWPVVVFLFASILAIEYVATWNSFLPSDQAPSETSVHCHDCWSIAALYFKFCRECWLGVRVDDPRTLISYFVVFMLACFKLRADHISSFSESSTYHQMKSQRKNSFVWRDLSFETKSMWTVLDYLRLYCYVHLLDVVLILILITGTLEYDILHLGYLAFALVFARMRLEILKKKNKIFRFLRVYNFVLIIFSLAYQSPFVGNFNDGKCETVDYIYEVIGFYKYDYGFRITARSALVEIIIFMLVSLQSYMFSSQEFDYVSRYLEAEQIGAIVREQEKKAARKTEQLQQIREAEEKKRQRNLQVEKMKSEMLNLRVQLHRMNSDSNFGVASPRTEGLRRRKSPYLIPDSGAASPEIDGVVHRKEEQPIDEDSQYPFEAHEFPVSTTPEALDSPEYSFGASPCEITEVQQDLDVMSMERERKQKSEGKENPLISAVQLIGDGVSQVQFIGNQAVNNLVNFLNISPENSDTNEQSSVDDEVYDEMESQKRKHTPFERSTSLQSDRSSDGTSFQIGRIFRHIWSRMQSNNDIVCYCCFIIAFLWNFSLLSMVYLAALFLYALCVHTGPTHIFWVIMLMYTEIYILLQYLYQIIIQHCGLSIDAPLLHELGFPTQRIKSSFVVSSLPLFLIYIFTLIQSSITVKDGDWVPSADFTSRRNARGSQKDLTRIRLSQRILDVFKKLRDSAKLVIRSIYRYWISLTRGAESPPYFVQVTMDVHMWPEDGIQPERVECRMNQLLRLVHNERCEKGNPDLCPYSSRVHVQSIERSTETPNEALVVLEVEYASPTNGCSSAEWYKSLTPASDVAKEIRKAQHSGLGEGTGFPYPILSVIGGGKRDTDLYAYIFGADLIVFFLVAIFYQSVIKNKSEFIDVYQLEDQFPFDFVIILMVIFFLIVVDRVIYLCSFATGKVVYYLFSLILFTYAVTEYAWSIYPTQQHAAGLALRIIFLAKAMSLALQAIQIRYGLPHKSTLYRQFLTSEVSRINYYGYRLYRALPFLYELRCVLDWSCTATSLTMYDWLKLEDVNASLYLVKCDTVLNRATHKHGEKQTKMTKCCNGICLFFILLCVIWAPMLMYSSGNPTNIANPIKDASVQIDLKTVGGKLTLYQTTLCERISGDNIDLGLDLGSQSFLPTYNKNDIQLICCQADASVLWLVPDTVVTRFIQSLDWDTDMDITFTWVLNRDRPKGKETVKYERSVDPLDLPKRSDIQMVLNGSMDGFRVHNLYPKFFRVTGSGDVRSFEDQTDEVSADILINHANFKWWWSFHNLKASENISACEGMDGPVAIIMSEETPPQGFLGDTLSKFSIWGLYITFVLAVGRFIRLQCSDLRMRIPYENLPSCDRLIAICEDLYAARAEGELGVEEVLYWTLVKIYRSPHMLLEYTKLDYDA.

A run of 19 helical transmembrane segments spans residues 5–25 (LVGFLLPSLLLAAALINWSVI), 27–47 (FLDLIAFLLVHYIAPEIGYRF), 57–77 (IFIFSFAVFLAQVVYLVIWAA), 105–125 (TVMYFLALQLLTSLVALADIY), 163–183 (AVQLAVGICNPSWVSLPFFIG), 207–227 (LYIYAGFNIVLLYLYQLPINF), 248–268 (EGPDICSGLFLVLFYIMLSYV), 325–345 (FFTYGFPVSLFALSFWSFHFA), 347–367 (LCAFGLLAYVGYIIYAFPSLF), 374–394 (GLLLVFILLWAVSTYIFNVAF), 404–424 (FGLGMLVALGNLVNNSVFLYL), 467–487 (LIFLIAMKPGFFHAVYVIFFL), 502–522 (SLILLCEVHFALLYILEIDLV), 554–574 (IALLACFCAIHNHGFEVLFSF), 653–673 (VYLVKPNYVSFGYIFLLLLWI), 694–714 (AVLVFMFIYCLSSFVSLQLWL), 730–750 (APLLDNVWESLAVLIVMQLYS), 792–812 (FYASLSPISVFGFVYLLGLVI), and 826–846 (SFLIYTGFLVSAEYLFQLWGM). A disordered region spans residues 927-947 (ASVSSSNGENPSSTDHASISM). A compositionally biased stretch (low complexity) spans 928–939 (SVSSSNGENPSS). 8 consecutive transmembrane segments (helical) span residues 1027–1047 (FWIENMFNLYGLEINMIALLL), 1050–1070 (FALLNAISMVYIALLAACVLL), 1078–1098 (LWPVVVFLFASILAIEYVATW), 1143–1160 (TLISYFVVFMLACFKLRA), 1204–1224 (LYCYVHLLDVVLILILITGTL), 1228–1248 (ILHLGYLAFALVFARMRLEIL), 1260–1280 (VYNFVLIIFSLAYQSPFVGNF), and 1310–1330 (SALVEIIIFMLVSLQSYMFSS). Residues 1347–1400 (AIVREQEKKAARKTEQLQQIREAEEKKRQRNLQVEKMKSEMLNLRVQLHRMNSD) adopt a coiled-coil conformation. Residues 1543–1583 (SDTNEQSSVDDEVYDEMESQKRKHTPFERSTSLQSDRSSDG) form a disordered region. The segment covering 1550-1559 (SVDDEVYDEM) has biased composition (acidic residues). Residues 1570–1583 (ERSTSLQSDRSSDG) are compositionally biased toward polar residues. 8 consecutive transmembrane segments (helical) span residues 1611–1631 (FIIAFLWNFSLLSMVYLAALF), 1647–1667 (VIMLMYTEIYILLQYLYQIII), 1916–1936 (YIFGADLIVFFLVAIFYQSVI), 1956–1976 (FVIILMVIFFLIVVDRVIYLC), 1984–2004 (VYYLFSLILFTYAVTEYAWSI), 2012–2032 (AGLALRIIFLAKAMSLALQAI), 2130–2150 (GICLFFILLCVIWAPMLMYSS), and 2369–2389 (FLGDTLSKFSIWGLYITFVLA).

This sequence belongs to the PIEZO (TC 1.A.75) family.

It is found in the membrane. Functionally, pore-forming subunit of a mechanosensitive non-specific cation channel, that conducts both sodium and potassium ions. The polypeptide is Piezo-type mechanosensitive ion channel homolog (Arabidopsis thaliana (Mouse-ear cress)).